The chain runs to 178 residues: Large ribosomal subunit protein uL6 (178 aa).

The tract at residues 159 to 178 is disordered; the sequence is GKGIRYEGEHVRRKEGKTGK.

It belongs to the universal ribosomal protein uL6 family. As to quaternary structure, part of the 50S ribosomal subunit.

Functionally, this protein binds to the 23S rRNA, and is important in its secondary structure. It is located near the subunit interface in the base of the L7/L12 stalk, and near the tRNA binding site of the peptidyltransferase center. This Listeria monocytogenes serotype 4b (strain CLIP80459) protein is Large ribosomal subunit protein uL6.